We begin with the raw amino-acid sequence, 532 residues long: Wee1-like protein kinase 2 (532 aa).

A disordered region spans residues 123–166; that stretch reads INPFTPDTVRRNSEHYKRKSQRSDDDEDYGPRSKEIQNSSEDES. Positions 188 to 465 constitute a Protein kinase domain; the sequence is FLELACIGVG…RHDVLCKERA (278 aa). Residues 194-202 and Lys217 contribute to the ATP site; that span reads IGVGEFGSV. Catalysis depends on Asp315, which acts as the Proton acceptor. Mg(2+)-binding residues include Asn320 and Asp354. The stretch at 469–495 forms a coiled coil; that stretch reads ATQLRKELNVEKFRTAMLERELKEARL.

Belongs to the protein kinase superfamily. Ser/Thr protein kinase family. WEE1 subfamily.

It localises to the nucleus. The catalysed reaction is L-tyrosyl-[protein] + ATP = O-phospho-L-tyrosyl-[protein] + ADP + H(+). Its function is as follows. Oocyte-specific protein tyrosine kinase that phosphorylates and inhibits cdk1 and acts as a key regulator of meiosis. Required to maintain meiotic arrest in oocytes by phosphorylating cdk1 at 'Tyr-15', leading to inhibit cdk1 activity and prevent meiotic reentry. This chain is Wee1-like protein kinase 2 (wee2), found in Danio rerio (Zebrafish).